Here is a 254-residue protein sequence, read N- to C-terminus: 5-oxoprolinase subunit A (254 aa).

This sequence belongs to the LamB/PxpA family. In terms of assembly, forms a complex composed of PxpA, PxpB and PxpC.

The catalysed reaction is 5-oxo-L-proline + ATP + 2 H2O = L-glutamate + ADP + phosphate + H(+). Catalyzes the cleavage of 5-oxoproline to form L-glutamate coupled to the hydrolysis of ATP to ADP and inorganic phosphate. In Burkholderia ambifaria (strain MC40-6), this protein is 5-oxoprolinase subunit A.